The primary structure comprises 278 residues: Tryptophan synthase alpha chain (278 aa).

Catalysis depends on proton acceptor residues Glu-50 and Asp-61.

The protein belongs to the TrpA family. As to quaternary structure, tetramer of two alpha and two beta chains.

The enzyme catalyses (1S,2R)-1-C-(indol-3-yl)glycerol 3-phosphate + L-serine = D-glyceraldehyde 3-phosphate + L-tryptophan + H2O. Its pathway is amino-acid biosynthesis; L-tryptophan biosynthesis; L-tryptophan from chorismate: step 5/5. In terms of biological role, the alpha subunit is responsible for the aldol cleavage of indoleglycerol phosphate to indole and glyceraldehyde 3-phosphate. The protein is Tryptophan synthase alpha chain of Rhodopseudomonas palustris (strain TIE-1).